Reading from the N-terminus, the 613-residue chain is Histone acetyltransferase KAT7 (613 aa).

A disordered region spans residues 1 to 175 (MAIGVVKRNA…SDLSHRPKRR (175 aa)). Phosphoserine is present on residues serine 12, serine 52, serine 55, serine 59, and serine 66. A compositionally biased stretch (low complexity) spans 44–59 (VTRSSARLSQSSQDSS). Threonine 87 and threonine 90 each carry phosphothreonine. The segment covering 98-107 (QTRSSGSETE) has biased composition (polar residues). Position 104 is a phosphoserine (serine 104). A Phosphothreonine modification is found at threonine 106. Residues 112-127 (FSDRETKNTADHDESP) are compositionally biased toward basic and acidic residues. 2 positions are modified to phosphoserine: serine 113 and serine 126. Position 130 is a phosphothreonine (threonine 130). The segment covering 136-147 (PSSESDIDISSP) has biased composition (low complexity). Residues 150-170 (SHDESIAKDMSLKDSGSDLSH) are compositionally biased toward basic and acidic residues. A phosphoserine mark is found at serine 160, serine 164, serine 166, and serine 180. The CCHHC-type zinc-finger motif lies at 178–221 (HESYNFNMKCPTPGCNSLGHLTGKHERHFSISGCPLYHNLSADE). Lysine 201 and lysine 279 each carry N6-acetyllysine. Lysine 325 is covalently cross-linked (Glycyl lysine isopeptide (Lys-Gly) (interchain with G-Cter in SUMO2)). Residues 334–609 (EGSNMIKTIA…MDPSCLKWTP (276 aa)) enclose the MYST-type HAT domain. A Glycyl lysine isopeptide (Lys-Gly) (interchain with G-Cter in ubiquitin) cross-link involves residue lysine 340. The C2HC MYST-type zinc-finger motif lies at 367-392 (LYMCEFCLKYMKSQTILRRHMAKCVW). Residues cysteine 370, cysteine 373, histidine 386, and cysteine 390 each coordinate Zn(2+). The residue at position 434 (lysine 434) is an N6-acetyllysine; by autocatalysis. Acetyl-CoA is bound by residues 477 to 479 (ILT) and 485 to 490 (RQGYGK). The residue at position 508 (serine 508) is a Phosphoserine. Glutamate 510 acts as the Proton donor/acceptor in catalysis. Residues serine 514 and serine 523 each contribute to the acetyl-CoA site.

This sequence belongs to the MYST (SAS/MOZ) family. Component of the HBO1 complex composed of KAT7/HBO1, MEAF6, ING4 or ING5, and one scaffold subunit: complexes containing BRPF scaffold (BRPF1, BRD1/BRPF2 or BRPF3) direct KAT7/HBO1 specificity towards H3K14ac, while complexes containing JADE scaffold (JADE1, JADE2 and JADE3) mediate acetylation of histone H4. Interacts with MCM2 and ORC1. Interacts with the androgen receptor (AR) in the presence of dihydrotestosterone. Interacts with CDT1. Interacts with MAP2K1 and CUL1. Interacts with p53/TP53; leading to inhibit histone acetyltransferase activity. Phosphorylated at Ser-52 and Ser-55 by ATR in response to DNA damage, promoting its ubiquitination by the CRL4(DDB2) complex and subsequent degradation. Phosphorylation at Ser-52 and Ser-55 by ATR in response to ultraviolet-induced DNA, promotes localization to DNA damage sites. Phosphorylation at Ser-59 by PLK1 during mitosis seems important for prereplicative complex formation and DNA replication licensing, and requires prior phosphorylation at Thr-87 and Thr-90 by CDK1. Phosphorylated by MAP2K1, which accelerates its degradation. Post-translationally, ubiquitinated at Lys-340, leading to proteasomal degradation. Ubiquitinated by the CRL4(DDB2) complex following phosphorylation by ATR, leading to its subsequent degradation. In terms of processing, autoacetylation at Lys-434 is required for proper function. As to expression, widely expressed in adult tissues.

It localises to the nucleus. Its subcellular location is the chromosome. The protein resides in the centromere. It is found in the cytoplasm. The protein localises to the cytosol. It catalyses the reaction L-lysyl-[protein] + acetyl-CoA = N(6)-acetyl-L-lysyl-[protein] + CoA + H(+). Its activity is regulated as follows. Histone acetyltransferase activity is inhibited by GMNN in the context of a complex with CDT1, inhibiting histone H4 acetylation and DNA replication licensing. In terms of biological role, catalytic subunit of histone acetyltransferase HBO1 complexes, which specifically mediate acetylation of histone H3 at 'Lys-14' (H3K14ac), thereby regulating various processes, such as gene transcription, protein ubiquitination, immune regulation, stem cell pluripotent and self-renewal maintenance and embryonic development. Some complexes also catalyze acetylation of histone H4 at 'Lys-5', 'Lys-8' and 'Lys-12' (H4K5ac, H4K8ac and H4K12ac, respectively), regulating DNA replication initiation, regulating DNA replication initiation. Specificity of the HBO1 complexes is determined by the scaffold subunit: complexes containing BRPF scaffold (BRPF1, BRD1/BRPF2 or BRPF3) direct KAT7/HBO1 specificity towards H3K14ac, while complexes containing JADE (JADE1, JADE2 and JADE3) scaffold direct KAT7/HBO1 specificity towards histone H4. H3K14ac promotes transcriptional elongation by facilitating the processivity of RNA polymerase II. Acts as a key regulator of hematopoiesis by forming a complex with BRD1/BRPF2, directing KAT7/HBO1 specificity towards H3K14ac and promoting erythroid differentiation. H3K14ac is also required for T-cell development. KAT7/HBO1-mediated acetylation facilitates two consecutive steps, licensing and activation, in DNA replication initiation: H3K14ac facilitates the activation of replication origins, and histone H4 acetylation (H4K5ac, H4K8ac and H4K12ac) facilitates chromatin loading of MCM complexes, promoting DNA replication licensing. Acts as a positive regulator of centromeric CENPA assembly: recruited to centromeres and mediates histone acetylation, thereby preventing centromere inactivation mediated by SUV39H1, possibly by increasing histone turnover/exchange. Involved in nucleotide excision repair: phosphorylation by ATR in response to ultraviolet irradiation promotes its localization to DNA damage sites, where it mediates histone acetylation to facilitate recruitment of XPC at the damaged DNA sites. Acts as an inhibitor of NF-kappa-B independently of its histone acetyltransferase activity. Plays a central role in the maintenance of leukemia stem cells in acute myeloid leukemia (AML). Acts by mediating acetylation of histone H3 at 'Lys-14' (H3K14ac), thereby facilitating the processivity of RNA polymerase II to maintain the high expression of key genes, such as HOXA9 and HOXA10 that help to sustain the functional properties of leukemia stem cells. This chain is Histone acetyltransferase KAT7, found in Mus musculus (Mouse).